A 417-amino-acid chain; its full sequence is S-adenosylmethionine synthase (417 aa).

Residue His16 coordinates ATP. Asp18 lines the Mg(2+) pocket. Glu44 is a K(+) binding site. The L-methionine site is built by Glu57 and Gln100. The tract at residues Gln100 to Thr110 is flexible loop. ATP contacts are provided by residues Asp175–Lys177, Lys251–Phe252, Asp260, Arg266–Lys267, Ala283, and Lys287. Residue Asp260 coordinates L-methionine. Lys291 serves as a coordination point for L-methionine.

The protein belongs to the AdoMet synthase family. In terms of assembly, homotetramer; dimer of dimers. It depends on Mg(2+) as a cofactor. K(+) serves as cofactor.

It is found in the cytoplasm. The catalysed reaction is L-methionine + ATP + H2O = S-adenosyl-L-methionine + phosphate + diphosphate. The protein operates within amino-acid biosynthesis; S-adenosyl-L-methionine biosynthesis; S-adenosyl-L-methionine from L-methionine: step 1/1. Its function is as follows. Catalyzes the formation of S-adenosylmethionine (AdoMet) from methionine and ATP. The overall synthetic reaction is composed of two sequential steps, AdoMet formation and the subsequent tripolyphosphate hydrolysis which occurs prior to release of AdoMet from the enzyme. The polypeptide is S-adenosylmethionine synthase (Synechococcus elongatus (strain ATCC 33912 / PCC 7942 / FACHB-805) (Anacystis nidulans R2)).